The chain runs to 313 residues: 4-hydroxy-3-methylbut-2-enyl diphosphate reductase (313 aa).

C20 is a binding site for [4Fe-4S] cluster. (2E)-4-hydroxy-3-methylbut-2-enyl diphosphate is bound by residues H49 and H82. Dimethylallyl diphosphate-binding residues include H49 and H82. H49 and H82 together coordinate isopentenyl diphosphate. C104 is a [4Fe-4S] cluster binding site. H132 lines the (2E)-4-hydroxy-3-methylbut-2-enyl diphosphate pocket. H132 contacts dimethylallyl diphosphate. H132 contributes to the isopentenyl diphosphate binding site. The Proton donor role is filled by E134. Residue T172 participates in (2E)-4-hydroxy-3-methylbut-2-enyl diphosphate binding. Residue C201 participates in [4Fe-4S] cluster binding. Residues S229, S230, N231, and S273 each contribute to the (2E)-4-hydroxy-3-methylbut-2-enyl diphosphate site. Residues S229, S230, N231, and S273 each contribute to the dimethylallyl diphosphate site. Isopentenyl diphosphate is bound by residues S229, S230, N231, and S273.

It belongs to the IspH family. [4Fe-4S] cluster is required as a cofactor.

It carries out the reaction isopentenyl diphosphate + 2 oxidized [2Fe-2S]-[ferredoxin] + H2O = (2E)-4-hydroxy-3-methylbut-2-enyl diphosphate + 2 reduced [2Fe-2S]-[ferredoxin] + 2 H(+). The enzyme catalyses dimethylallyl diphosphate + 2 oxidized [2Fe-2S]-[ferredoxin] + H2O = (2E)-4-hydroxy-3-methylbut-2-enyl diphosphate + 2 reduced [2Fe-2S]-[ferredoxin] + 2 H(+). It functions in the pathway isoprenoid biosynthesis; dimethylallyl diphosphate biosynthesis; dimethylallyl diphosphate from (2E)-4-hydroxy-3-methylbutenyl diphosphate: step 1/1. It participates in isoprenoid biosynthesis; isopentenyl diphosphate biosynthesis via DXP pathway; isopentenyl diphosphate from 1-deoxy-D-xylulose 5-phosphate: step 6/6. Catalyzes the conversion of 1-hydroxy-2-methyl-2-(E)-butenyl 4-diphosphate (HMBPP) into a mixture of isopentenyl diphosphate (IPP) and dimethylallyl diphosphate (DMAPP). Acts in the terminal step of the DOXP/MEP pathway for isoprenoid precursor biosynthesis. This is 4-hydroxy-3-methylbut-2-enyl diphosphate reductase from Desulfotalea psychrophila (strain LSv54 / DSM 12343).